A 241-amino-acid polypeptide reads, in one-letter code: Adapter protein MecA (241 aa).

The disordered stretch occupies residues Thr115 to Asn141.

This sequence belongs to the MecA family. Homodimer.

Functionally, enables the recognition and targeting of unfolded and aggregated proteins to the ClpC protease or to other proteins involved in proteolysis. In Pediococcus pentosaceus (strain ATCC 25745 / CCUG 21536 / LMG 10740 / 183-1w), this protein is Adapter protein MecA.